Here is a 260-residue protein sequence, read N- to C-terminus: Methylesterase 7 (260 aa).

Residue Ser84 is the Acyl-ester intermediate of the active site. Catalysis depends on charge relay system residues Asp210 and His238.

It belongs to the AB hydrolase superfamily. Methylesterase family.

It carries out the reaction methyl (indol-3-yl)acetate + H2O = (indol-3-yl)acetate + methanol + H(+). The enzyme catalyses methyl salicylate + H2O = salicylate + methanol + H(+). It functions in the pathway plant hormone biosynthesis. Its activity is regulated as follows. Esterase activity is down-regulated by salicylic acid (SA). Functionally, methylesterase shown to have carboxylesterase activity, methyl indole-3-acetic acid (MeIAA) esterase activity and methyl salicylate (MeSA) esterase activity in vitro. Required to convert methyl salicylate (MeSA) to salicylic acid (SA) as part of the signal transduction pathways that activate systemic acquired resistance in systemic tissue. MeSA is believed to be an inactive form that needs to be demethylated to exert a biological effect. This is Methylesterase 7 from Arabidopsis thaliana (Mouse-ear cress).